Reading from the N-terminus, the 112-residue chain is Large ribosomal subunit protein eL30 (112 aa).

This sequence belongs to the eukaryotic ribosomal protein eL30 family.

This chain is Large ribosomal subunit protein eL30 (RPL30), found in Zea mays (Maize).